Consider the following 683-residue polypeptide: FAD-binding monooxygenase ausC (683 aa).

Residue N5 is glycosylated (N-linked (GlcNAc...) asparagine). Residues 111-131 (ILIIGAGFGGLLFAVRLIQTG) form a helical membrane-spanning segment. FAD contacts are provided by residues 150-153 (TWYW), 162-163 (DT), and Y168. An NADP(+)-binding site is contributed by 160–162 (MCD). N286 carries an N-linked (GlcNAc...) asparagine glycan. Residues 310 to 316 (TGASAVQ) and 333 to 334 (RT) contribute to the NADP(+) site. N-linked (GlcNAc...) asparagine glycosylation is found at N525 and N572.

This sequence belongs to the FAD-binding monooxygenase family. Requires FAD as cofactor.

The protein localises to the membrane. The catalysed reaction is preaustinoid A + AH2 + O2 = preaustinoid A1 + A + H2O. It functions in the pathway secondary metabolite biosynthesis; terpenoid biosynthesis. FAD-binding monooxygenase; part of the gene cluster A that mediates the biosynthesis of austinol and dehydroaustinol, two fungal meroterpenoids. The first step of the pathway is the synthesis of 3,5-dimethylorsellinic acid by the polyketide synthase ausA. 3,5-dimethylorsellinic acid is then prenylated by the polyprenyl transferase ausN. Further epoxidation by the FAD-dependent monooxygenase ausM and cyclization by the probable terpene cyclase ausL lead to the formation of protoaustinoid A. Protoaustinoid A is then oxidized to spiro-lactone preaustinoid A3 by the combined action of the FAD-binding monooxygenases ausB and ausC, and the dioxygenase ausE. Acid-catalyzed keto-rearrangement and ring contraction of the tetraketide portion of preaustinoid A3 by ausJ lead to the formation of preaustinoid A4. The aldo-keto reductase ausK, with the help of ausH, is involved in the next step by transforming preaustinoid A4 into isoaustinone which is in turn hydroxylated by the P450 monooxygenase ausI to form austinolide. Finally, the cytochrome P450 monooxygenase ausG modifies austinolide to austinol. Austinol can be further modified to dehydroaustinol which forms a diffusible complex with diorcinol that initiates conidiation. Due to genetic rearrangements of the clusters and the subsequent loss of some enzymes, the end products of the Emericella nidulans austinoid biosynthesis clusters are austinol and dehydroaustinol, even if additional enzymes, such as the O-acetyltransferase ausQ and the cytochrome P450 monooxygenase ausR are still functional. This is FAD-binding monooxygenase ausC from Emericella nidulans (strain FGSC A4 / ATCC 38163 / CBS 112.46 / NRRL 194 / M139) (Aspergillus nidulans).